A 374-amino-acid polypeptide reads, in one-letter code: Pectate lyase 2 (374 aa).

Positions 1-22 are cleaved as a signal peptide; sequence MKYLLPTAAAGLLLLAAQPAMA. The cysteines at positions 93 and 176 are disulfide-linked. Positions 150, 152, 187, and 191 each coordinate Ca(2+). The active site involves Arg239. A disulfide bridge links Cys350 with Cys373.

The protein belongs to the polysaccharide lyase 1 family. PLADES subfamily. The cofactor is Ca(2+).

Its subcellular location is the secreted. It catalyses the reaction Eliminative cleavage of (1-&gt;4)-alpha-D-galacturonan to give oligosaccharides with 4-deoxy-alpha-D-galact-4-enuronosyl groups at their non-reducing ends.. It functions in the pathway glycan metabolism; pectin degradation; 2-dehydro-3-deoxy-D-gluconate from pectin: step 2/5. Involved in maceration and soft-rotting of plant tissue. This chain is Pectate lyase 2 (pel2), found in Pectobacterium carotovorum (Erwinia carotovora).